Here is a 591-residue protein sequence, read N- to C-terminus: V-type ATP synthase alpha chain (591 aa).

Glycine 242–threonine 249 provides a ligand contact to ATP.

It belongs to the ATPase alpha/beta chains family.

The enzyme catalyses ATP + H2O + 4 H(+)(in) = ADP + phosphate + 5 H(+)(out). Functionally, produces ATP from ADP in the presence of a proton gradient across the membrane. The V-type alpha chain is a catalytic subunit. This chain is V-type ATP synthase alpha chain (atpA), found in Chlamydia muridarum (strain MoPn / Nigg).